A 302-amino-acid chain; its full sequence is Small ribosomal subunit protein uS2 (302 aa).

Residues 275–302 (EGEGESEAEPVVAKKKPVRAKRPAVKAE) form a disordered region. Positions 287–302 (AKKKPVRAKRPAVKAE) are enriched in basic residues.

It belongs to the universal ribosomal protein uS2 family.

This Opitutus terrae (strain DSM 11246 / JCM 15787 / PB90-1) protein is Small ribosomal subunit protein uS2.